The primary structure comprises 668 residues: tRNA 5-methylaminomethyl-2-thiouridine biosynthesis bifunctional protein MnmC (668 aa).

Residues 1–245 (MKHYSIQPAN…KREMLCGVME (245 aa)) form a tRNA (mnm(5)s(2)U34)-methyltransferase region. The interval 270–668 (IGGGIASALL…LLKGKAVKAG (399 aa)) is FAD-dependent cmnm(5)s(2)U34 oxidoreductase.

In the N-terminal section; belongs to the methyltransferase superfamily. tRNA (mnm(5)s(2)U34)-methyltransferase family. It in the C-terminal section; belongs to the DAO family. Requires FAD as cofactor.

It is found in the cytoplasm. The catalysed reaction is 5-aminomethyl-2-thiouridine(34) in tRNA + S-adenosyl-L-methionine = 5-methylaminomethyl-2-thiouridine(34) in tRNA + S-adenosyl-L-homocysteine + H(+). Catalyzes the last two steps in the biosynthesis of 5-methylaminomethyl-2-thiouridine (mnm(5)s(2)U) at the wobble position (U34) in tRNA. Catalyzes the FAD-dependent demodification of cmnm(5)s(2)U34 to nm(5)s(2)U34, followed by the transfer of a methyl group from S-adenosyl-L-methionine to nm(5)s(2)U34, to form mnm(5)s(2)U34. This is tRNA 5-methylaminomethyl-2-thiouridine biosynthesis bifunctional protein MnmC from Escherichia coli (strain UTI89 / UPEC).